The sequence spans 685 residues: Small ribosomal subunit protein mS39 (685 aa).

A mitochondrion-targeting transit peptide spans 1 to 10 (MAAAAVAARR). N6-acetyllysine is present on Lys-127. PPR repeat units lie at residues 150 to 184 (IEDVSEAALEERIRLRKVRASVDMFDQLLQAGTTV), 185 to 220 (SLETTNSLLDLLCYYGDQEPPADYPFQQTEHLENLE), 254 to 288 (NARSYCTMIRGMVKHRAYAQALNVYTELLNNRLSA), 289 to 329 (DVYT…KVKP), 330 to 366 (NLQTFNTILKGLRKCYSLGRIPALQILREMKHIGIEP), 367 to 407 (SLAT…TFSP), 412 to 446 (DGRFFQLAMSVCSSLRDLELAYQVHRLLNTGDNRK), 454 to 488 (RKVYYSKFFSLICSLEQIDVTLKWYKDLIPSVFLP), 489 to 523 (HYQIFIGLLQALDVANRLELVPQIWKDSKEYSHTF), and 572 to 606 (PANPLQYIAVLFLRGGRSQEAWKMLELFKKHKKIP). Residues 663 to 685 (LGNLTELNSSDGESSSDSDSDDK) are disordered. Residues 676-685 (SSSDSDSDDK) are compositionally biased toward acidic residues.

The protein belongs to the mitochondrion-specific ribosomal protein mS39 family. As to quaternary structure, component of the mitochondrial ribosome small subunit (28S) which comprises a 12S rRNA and about 30 distinct proteins. Associated with the 12S mitochondrial rRNA (12S mt-rRNA).

It is found in the mitochondrion. Functionally, mitochondrial RNA-binding protein that has a role in mitochondrial translation. This is Small ribosomal subunit protein mS39 (Ptcd3) from Mus musculus (Mouse).